The following is a 198-amino-acid chain: Acyl carrier protein phosphodiesterase (198 aa).

The protein belongs to the AcpH family.

It carries out the reaction holo-[ACP] + H2O = apo-[ACP] + (R)-4'-phosphopantetheine + H(+). Its function is as follows. Converts holo-ACP to apo-ACP by hydrolytic cleavage of the phosphopantetheine prosthetic group from ACP. The polypeptide is Acyl carrier protein phosphodiesterase (Photorhabdus laumondii subsp. laumondii (strain DSM 15139 / CIP 105565 / TT01) (Photorhabdus luminescens subsp. laumondii)).